Consider the following 216-residue polypeptide: MKFFLDTANIEEIKEAYSLGVISGVTTNPSLVAKEGRDFKEVIREIAEIVDGPISAEVISDDHEGMVKEARELAKIHKNIVIKIPMTAEGLKAVNILSKEGIKTNVTLIFSANQALLAARAGATYVSPFVGRLDDINTDGMQIIEDIVTIFTNYDIQAEIITASVRHPIHVLEAAKLGAHIATVPYKVLMQMIKHPLTDIGIERFKEDWKKAGLKI.

Catalysis depends on K83, which acts as the Schiff-base intermediate with substrate.

This sequence belongs to the transaldolase family. Type 3B subfamily.

It localises to the cytoplasm. It carries out the reaction D-sedoheptulose 7-phosphate + D-glyceraldehyde 3-phosphate = D-erythrose 4-phosphate + beta-D-fructose 6-phosphate. Its pathway is carbohydrate degradation; pentose phosphate pathway; D-glyceraldehyde 3-phosphate and beta-D-fructose 6-phosphate from D-ribose 5-phosphate and D-xylulose 5-phosphate (non-oxidative stage): step 2/3. Its function is as follows. Transaldolase is important for the balance of metabolites in the pentose-phosphate pathway. This Caldanaerobacter subterraneus subsp. tengcongensis (strain DSM 15242 / JCM 11007 / NBRC 100824 / MB4) (Thermoanaerobacter tengcongensis) protein is Probable transaldolase.